The following is a 242-amino-acid chain: Leucyl/phenylalanyl-tRNA--protein transferase (242 aa).

Belongs to the L/F-transferase family.

It is found in the cytoplasm. It carries out the reaction N-terminal L-lysyl-[protein] + L-leucyl-tRNA(Leu) = N-terminal L-leucyl-L-lysyl-[protein] + tRNA(Leu) + H(+). The catalysed reaction is N-terminal L-arginyl-[protein] + L-leucyl-tRNA(Leu) = N-terminal L-leucyl-L-arginyl-[protein] + tRNA(Leu) + H(+). It catalyses the reaction L-phenylalanyl-tRNA(Phe) + an N-terminal L-alpha-aminoacyl-[protein] = an N-terminal L-phenylalanyl-L-alpha-aminoacyl-[protein] + tRNA(Phe). In terms of biological role, functions in the N-end rule pathway of protein degradation where it conjugates Leu, Phe and, less efficiently, Met from aminoacyl-tRNAs to the N-termini of proteins containing an N-terminal arginine or lysine. The polypeptide is Leucyl/phenylalanyl-tRNA--protein transferase (Alcanivorax borkumensis (strain ATCC 700651 / DSM 11573 / NCIMB 13689 / SK2)).